A 243-amino-acid polypeptide reads, in one-letter code: Probable transcriptional regulatory protein PTH_1024 (243 aa).

Belongs to the TACO1 family.

The protein resides in the cytoplasm. The chain is Probable transcriptional regulatory protein PTH_1024 from Pelotomaculum thermopropionicum (strain DSM 13744 / JCM 10971 / SI).